A 384-amino-acid polypeptide reads, in one-letter code: Brix domain-containing protein F44G4.1 (384 aa).

Disordered stretches follow at residues 1-58 (MAPK…KVVK) and 82-135 (SKAT…PQKE). Residues 18 to 48 (FVEEEVTGDVDEDGFEQAEDMPDEVDSDEDE) are compositionally biased toward acidic residues. Over residues 96–114 (LPKSQRGKALKRALRKDKR) the composition is skewed to basic residues. Over residues 115–127 (ARQGERAQIRDEL) the composition is skewed to basic and acidic residues. One can recognise a Brix domain in the interval 177 to 360 (PKVMITMTPK…LKWLQKGTFD (184 aa)).

In Caenorhabditis elegans, this protein is Brix domain-containing protein F44G4.1.